An 852-amino-acid chain; its full sequence is DNA repair protein rhp54 (852 aa).

2 consecutive short sequence motifs (nuclear localization signal) follow at residues 35–51 (KKFK…RKEL) and 178–181 (KRKK). Positions 187–205 (NRKGKKEISDSEPESDHDS) are enriched in basic and acidic residues. The disordered stretch occupies residues 187-208 (NRKGKKEISDSEPESDHDSCVS). The Helicase ATP-binding domain maps to 281-459 (GRIDRCANGC…FSLLNFANPG (179 aa)). 294 to 301 (DEMGLGKT) lines the ATP pocket. Positions 410–413 (DEGH) match the DEGH box motif. The region spanning 614 to 767 (VLERMLYQIK…CVVDEAQDVE (154 aa)) is the Helicase C-terminal domain.

This sequence belongs to the SNF2/RAD54 helicase family. In terms of assembly, homohexamer. Interacts with rhp51.

The protein resides in the nucleus. The catalysed reaction is ATP + H2O = ADP + phosphate + H(+). In terms of biological role, plays an essential role in homologous recombination (HR) which is a major pathway for repairing DNA double-strand breaks (DSBs), single-stranded DNA (ssDNA) gaps, and stalled or collapsed replication forks. Acts as a molecular motor during the homology search and guides RAD51 ssDNA along a donor dsDNA thereby changing the homology search from the diffusion-based mechanism to a motor-guided mechanism. Plays also an essential role in RAD51-mediated synaptic complex formation which consists of three strands encased in a protein filament formed once homology is recognized. Once DNA strand exchange occured, dissociates RAD51 from nucleoprotein filaments formed on dsDNA. The chain is DNA repair protein rhp54 (rhp54) from Schizosaccharomyces pombe (strain 972 / ATCC 24843) (Fission yeast).